The chain runs to 114 residues: Large ribosomal subunit protein uL22c (114 aa).

Belongs to the universal ribosomal protein uL22 family. In terms of assembly, part of the 50S ribosomal subunit.

It localises to the plastid. It is found in the chloroplast. In terms of biological role, this protein binds specifically to 23S rRNA. The globular domain of the protein is located near the polypeptide exit tunnel on the outside of the subunit, while an extended beta-hairpin is found that lines the wall of the exit tunnel in the center of the 70S ribosome. This Gracilaria tenuistipitata var. liui (Red alga) protein is Large ribosomal subunit protein uL22c (rpl22).